Here is a 290-residue protein sequence, read N- to C-terminus: 33 kDa chaperonin (290 aa).

2 disulfides stabilise this stretch: Cys-235-Cys-237 and Cys-268-Cys-271.

Belongs to the HSP33 family. Under oxidizing conditions two disulfide bonds are formed involving the reactive cysteines. Under reducing conditions zinc is bound to the reactive cysteines and the protein is inactive.

It is found in the cytoplasm. Redox regulated molecular chaperone. Protects both thermally unfolding and oxidatively damaged proteins from irreversible aggregation. Plays an important role in the bacterial defense system toward oxidative stress. In Streptococcus pyogenes serotype M18 (strain MGAS8232), this protein is 33 kDa chaperonin.